The sequence spans 1686 residues: A disintegrin and metalloproteinase with thrombospondin motifs 7 (1686 aa).

An N-terminal signal peptide occupies residues 1-27 (MPGGPSPRSPAPLLRPLLLLLCALAPG). Residues 28-236 (APGPAPGRAT…RPRLRRLHQR (209 aa)) constitute a propeptide that is removed on maturation. A glycan (N-linked (GlcNAc...) asparagine) is linked at Asn-94. Residues 202-209 (STCGVQVY) carry the Cysteine switch motif. Residue Cys-204 participates in Zn(2+) binding. One can recognise a Peptidase M12B domain in the interval 242–452 (KWVETLVVAD…GWGLCLDDPP (211 aa)). Cystine bridges form between Cys-318-Cys-372, Cys-347-Cys-354, Cys-366-Cys-447, Cys-405-Cys-431, Cys-474-Cys-497, Cys-485-Cys-503, Cys-492-Cys-522, Cys-516-Cys-527, Cys-550-Cys-587, Cys-554-Cys-592, and Cys-565-Cys-577. His-388 lines the Zn(2+) pocket. Residue Glu-389 is part of the active site. His-392 and His-398 together coordinate Zn(2+). The 76-residue stretch at 462–537 (VPPGVLYDVS…VPVGFRPEAV (76 aa)) folds into the Disintegrin domain. One can recognise a TSP type-1 1 domain in the interval 538-593 (DGGWSGWSAWSICSRSCGMGVQSAERQCTQPTPKYKGRYCVGERKRFRLCNLQACP). 2 N-linked (GlcNAc...) asparagine glycosylation sites follow: Asn-693 and Asn-778. Positions 698-809 (HTVSGTFEEA…PGVHYEYTIH (112 aa)) are spacer. 3 TSP type-1 domains span residues 821 to 880 (PVFS…QPCP), 881 to 940 (ARWW…NRHV), and 942 to 995 (CPAT…PLCR). 3 disordered regions span residues 1024 to 1043 (HHLA…TMGN), 1080 to 1257 (PSEE…SPDV), and 1344 to 1396 (LGHM…PLAP). The segment covering 1182–1205 (DGLQTPATPESQNDFPVGKDSQSQ) has biased composition (polar residues). The span at 1210–1226 (WRDRTNEVFKDDEEPKG) shows a compositional bias: basic and acidic residues. Residues 1360 to 1375 (PESLSPEVPLSSRLLS) are compositionally biased toward low complexity. TSP type-1 domains follow at residues 1411-1459 (RNAG…RRCH), 1462-1522 (PCAT…QPCL), 1523-1567 (SWYT…PCNT), and 1569-1629 (PCTQ…EDCE). The PLAC domain occupies 1632-1672 (EPPRCERDRLSFGFCETLRLLGRCQLPTIRTQCCRSCSPPS). The interval 1666 to 1686 (RSCSPPSHGAPSRGHQRVARR) is disordered.

As to quaternary structure, interacts with COMP. Zn(2+) serves as cofactor. N-glycosylated. Can be O-fucosylated by POFUT2 on a serine or a threonine residue found within the consensus sequence C1-X(2)-(S/T)-C2-G of the TSP type-1 repeat domains where C1 and C2 are the first and second cysteine residue of the repeat, respectively. Fucosylated repeats can then be further glycosylated by the addition of a beta-1,3-glucose residue by the glucosyltransferase, B3GALTL. Fucosylation mediates the efficient secretion of ADAMTS family members. Can also be C-glycosylated with one or two mannose molecules on tryptophan residues within the consensus sequence W-X-X-W of the TPRs. N- and C-glycosylations can also facilitate secretion. Post-translationally, O-glycosylated proteoglycan; contains chondroitin sulfate. In terms of processing, may be cleaved by a furin endopeptidase. The precursor is sequentially processed. As to expression, expressed in heart, brain, placenta, lung, liver, skeletal muscle, kidney and pancreas. Detected in meniscus, bone, tendon, cartilage, synovium, fat and ligaments.

The protein localises to the secreted. It localises to the extracellular space. The protein resides in the extracellular matrix. In terms of biological role, metalloprotease. Was previously shown to degrade COMP. However, a later study found no activity against COMP. The sequence is that of A disintegrin and metalloproteinase with thrombospondin motifs 7 (ADAMTS7) from Homo sapiens (Human).